A 226-amino-acid polypeptide reads, in one-letter code: UPF0111 protein PH0637 (226 aa).

It belongs to the UPF0111 family.

The chain is UPF0111 protein PH0637 from Pyrococcus horikoshii (strain ATCC 700860 / DSM 12428 / JCM 9974 / NBRC 100139 / OT-3).